Consider the following 364-residue polypeptide: Fructose-bisphosphate aldolase A (364 aa).

Y5 carries the post-translational modification Phosphotyrosine. T9 carries the phosphothreonine modification. 2 positions are modified to phosphoserine: S36 and S39. An N6-acetyllysine; alternate modification is found at K42. A Glycyl lysine isopeptide (Lys-Gly) (interchain with G-Cter in SUMO1); alternate cross-link involves residue K42. K42 participates in a covalent cross-link: Glycyl lysine isopeptide (Lys-Gly) (interchain with G-Cter in SUMO2); alternate. R43 lines the beta-D-fructose 1,6-bisphosphate pocket. Phosphoserine is present on S46. At K99 the chain carries N6-(2-hydroxyisobutyryl)lysine. K108 carries the N6-acetyllysine modification. Position 111 is an N6-acetyllysine; alternate (K111). At K111 the chain carries N6-malonyllysine; alternate. S132 carries the post-translational modification Phosphoserine. An N6-(2-hydroxyisobutyryl)lysine modification is found at K147. E188 functions as the Proton acceptor in the catalytic mechanism. The active-site Schiff-base intermediate with dihydroxyacetone-P is K230. S272 carries the post-translational modification Phosphoserine. Beta-D-fructose 1,6-bisphosphate-binding positions include 272–274 (SGG), S301, and R304. K312 carries the post-translational modification N6-malonyllysine. An N6-acetyllysine modification is found at K330.

The protein belongs to the class I fructose-bisphosphate aldolase family. In terms of assembly, homotetramer. Interacts with SNX9 and WAS. Interacts with FBP2; the interaction blocks FBP2 inhibition by physiological concentrations of AMP and reduces inhibition by Ca(2+).

The protein localises to the cytoplasm. The protein resides in the myofibril. Its subcellular location is the sarcomere. It localises to the i band. It is found in the m line. It catalyses the reaction beta-D-fructose 1,6-bisphosphate = D-glyceraldehyde 3-phosphate + dihydroxyacetone phosphate. The protein operates within carbohydrate degradation; glycolysis; D-glyceraldehyde 3-phosphate and glycerone phosphate from D-glucose: step 4/4. Functionally, catalyzes the reversible conversion of beta-D-fructose 1,6-bisphosphate (FBP) into two triose phosphate and plays a key role in glycolysis and gluconeogenesis. In addition, may also function as scaffolding protein. This Pongo abelii (Sumatran orangutan) protein is Fructose-bisphosphate aldolase A (ALDOA).